Here is a 451-residue protein sequence, read N- to C-terminus: MSFSQDMDNEYEKLIRRMNPPRVVIDNDSCKKATVIRVDSANEYGILLEVVQILTDLNLTITKAYISSDGGWFMDVFNVTDQDGNKVTDEVVLDYIQKSLGPEACFSTSMRSVGVIPSTDSTVIELTGCDRPGLLSELSAVLTHLKCSVLNAEIWTHNTRAAAVMQVTDDLTGCGISDPERLSRIKNLLRNVLKGSNTPREAKTVVSHGEVHTDRRLHQMMFEDRDYEHRLVDDDSSIQDERQRPDVCVDNWLDKDYSVVTVRCKDRPKLLFDTVCTLTDMQYVVFHGSVDTEGTEAFQEYYVRHIDGSPVKSEAEKQRVIQCLEAAIKRRVSEGLKLELCTTDRVGLLSNVTRIFRENSLTVTRAEVKTKGGKALNTFYVSDASGYSIDAKTIDSIRQTIGQTILKVKNNPQEQQQRQKSPSHESPTRFLFGGLFKSKSFVNFGLVRSYS.

4 consecutive ACT domains span residues 35–118, 123–200, 259–335, and 337–416; these read VIRV…VIPS, VIEL…NTPR, VVTV…VSEG, and KLEL…QEQQ. The interval 409–428 is disordered; sequence KNNPQEQQQRQKSPSHESPT. The segment covering 410–420 has biased composition (polar residues); that stretch reads NNPQEQQQRQK.

Highly expressed in flowers and at lower levels in leaves and siliques.

Its function is as follows. May bind amino acids. This Arabidopsis thaliana (Mouse-ear cress) protein is ACT domain-containing protein ACR4.